Here is a 468-residue protein sequence, read N- to C-terminus: Methylenetetrahydrofolate--tRNA-(uracil-5-)-methyltransferase TrmFO (468 aa).

Residue Gly-10–Gly-15 coordinates FAD.

It belongs to the MnmG family. TrmFO subfamily. FAD serves as cofactor.

It localises to the cytoplasm. The enzyme catalyses uridine(54) in tRNA + (6R)-5,10-methylene-5,6,7,8-tetrahydrofolate + NADH + H(+) = 5-methyluridine(54) in tRNA + (6S)-5,6,7,8-tetrahydrofolate + NAD(+). It catalyses the reaction uridine(54) in tRNA + (6R)-5,10-methylene-5,6,7,8-tetrahydrofolate + NADPH + H(+) = 5-methyluridine(54) in tRNA + (6S)-5,6,7,8-tetrahydrofolate + NADP(+). In terms of biological role, catalyzes the folate-dependent formation of 5-methyl-uridine at position 54 (M-5-U54) in all tRNAs. In Chelativorans sp. (strain BNC1), this protein is Methylenetetrahydrofolate--tRNA-(uracil-5-)-methyltransferase TrmFO.